The sequence spans 397 residues: Dual-specificity RNA methyltransferase RlmN (397 aa).

Glu-130 serves as the catalytic Proton acceptor. A Radical SAM core domain is found at Val-138 to Arg-377. Cys-145 and Cys-383 are joined by a disulfide. [4Fe-4S] cluster-binding residues include Cys-152, Cys-156, and Cys-159. S-adenosyl-L-methionine is bound by residues Gly-209–Glu-210, Ser-241, Ser-263–His-265, and Asn-340. Cys-383 serves as the catalytic S-methylcysteine intermediate.

The protein belongs to the radical SAM superfamily. RlmN family. It depends on [4Fe-4S] cluster as a cofactor.

It is found in the cytoplasm. It carries out the reaction adenosine(2503) in 23S rRNA + 2 reduced [2Fe-2S]-[ferredoxin] + 2 S-adenosyl-L-methionine = 2-methyladenosine(2503) in 23S rRNA + 5'-deoxyadenosine + L-methionine + 2 oxidized [2Fe-2S]-[ferredoxin] + S-adenosyl-L-homocysteine. It catalyses the reaction adenosine(37) in tRNA + 2 reduced [2Fe-2S]-[ferredoxin] + 2 S-adenosyl-L-methionine = 2-methyladenosine(37) in tRNA + 5'-deoxyadenosine + L-methionine + 2 oxidized [2Fe-2S]-[ferredoxin] + S-adenosyl-L-homocysteine. In terms of biological role, specifically methylates position 2 of adenine 2503 in 23S rRNA and position 2 of adenine 37 in tRNAs. m2A2503 modification seems to play a crucial role in the proofreading step occurring at the peptidyl transferase center and thus would serve to optimize ribosomal fidelity. The polypeptide is Dual-specificity RNA methyltransferase RlmN (Granulibacter bethesdensis (strain ATCC BAA-1260 / CGDNIH1)).